Consider the following 457-residue polypeptide: Argininosuccinate lyase (457 aa).

This sequence belongs to the lyase 1 family. Argininosuccinate lyase subfamily.

The protein localises to the cytoplasm. It catalyses the reaction 2-(N(omega)-L-arginino)succinate = fumarate + L-arginine. The protein operates within amino-acid biosynthesis; L-arginine biosynthesis; L-arginine from L-ornithine and carbamoyl phosphate: step 3/3. This is Argininosuccinate lyase from Aquifex aeolicus (strain VF5).